A 229-amino-acid polypeptide reads, in one-letter code: Putative N-acetylmannosamine-6-phosphate 2-epimerase (229 aa).

The protein belongs to the NanE family.

It carries out the reaction an N-acyl-D-glucosamine 6-phosphate = an N-acyl-D-mannosamine 6-phosphate. The protein operates within amino-sugar metabolism; N-acetylneuraminate degradation; D-fructose 6-phosphate from N-acetylneuraminate: step 3/5. Converts N-acetylmannosamine-6-phosphate (ManNAc-6-P) to N-acetylglucosamine-6-phosphate (GlcNAc-6-P). This Escherichia coli O139:H28 (strain E24377A / ETEC) protein is Putative N-acetylmannosamine-6-phosphate 2-epimerase.